Here is a 382-residue protein sequence, read N- to C-terminus: Nuclear hormone receptor family member nhr-106 (382 aa).

The nuclear receptor DNA-binding region spans 2–78; it reads QTTCEICEVP…MGMMPEKVKV (77 aa). 2 consecutive NR C4-type zinc fingers follow at residues 5–25 and 42–61; these read CEIC…CRGC and CKYS…CKSC. Positions 110–380 constitute an NR LBD domain; sequence DVSNLITRGL…FSNPEMFIDS (271 aa).

Belongs to the nuclear hormone receptor family.

The protein resides in the nucleus. Orphan nuclear receptor. The protein is Nuclear hormone receptor family member nhr-106 (nhr-106) of Caenorhabditis elegans.